The following is a 147-amino-acid chain: Probable cytidine deaminase (147 aa).

Residues 4-130 (EELEKCIDAA…KLLPGLFSQE (127 aa)) form the CMP/dCMP-type deaminase domain. 45-51 (NVENSSY) lines the substrate pocket. C56 is a binding site for Zn(2+). E58 acts as the Proton donor in catalysis. Zn(2+)-binding residues include C90 and C93.

Belongs to the cytidine and deoxycytidylate deaminase family. Zn(2+) serves as cofactor.

The enzyme catalyses cytidine + H2O + H(+) = uridine + NH4(+). The catalysed reaction is 2'-deoxycytidine + H2O + H(+) = 2'-deoxyuridine + NH4(+). Functionally, this enzyme scavenges exogenous and endogenous cytidine and 2'-deoxycytidine for UMP synthesis. This is Probable cytidine deaminase (cda) from Dictyostelium discoideum (Social amoeba).